A 126-amino-acid polypeptide reads, in one-letter code: Fatty acid-binding protein, liver (126 aa).

Position 2 is an N-acetylalanine (Ala2).

Belongs to the calycin superfamily. Fatty-acid binding protein (FABP) family. Liver.

It is found in the cytoplasm. In terms of biological role, binds free fatty acids and their coenzyme A derivatives, bilirubin, and some other small molecules in the cytoplasm. May be involved in intracellular lipid transport this L-FABP binds only one fatty acid/molecule. Has more affinity for trans-parinaric acid than for cis-parinaric acid. The sequence is that of Fatty acid-binding protein, liver (fabp1) from Rhamdia sapo (South American catfish).